The sequence spans 705 residues: MARTTPIERYRNFGIMAHIDAGKTTTSERILFYTGVSHKIGEVHDGAAVMDWMEQEQERGITITSAATTAFWSGMDKSMPQHRFNIIDTPGHVDFTIEVERSLRVLDGAVFVLCAVGGVQPQSETVWRQANKYSVPRMAFVNKMDRTGANFDKVVEQLKARLGAYAVPMQVPIGAEDGFEGVVDLLKMKAIHWDTASQGTTFEYRDIPADLVDVATEARSFMVEAAAEASEDLMDKYLNEGDLSEQEILSGLRERTLKVEIVPVFCGSAFKNKGVQAMLDGVVHLLPSPADRPPVQGIDEDEKEDTRAATDTAPFSALAFKIMTDPFVGSLTFFRVYSGTLNSGDQVYNPVKSKKERVGRILQMHSNNREEIKEVRAGDIAAAVGLKDVTTGDTLCAQDKIITLERMVFPEPVISMAVEPKTKSDQEKMGMALGRLAQEDPSFRVKTDEESGQTIISGMGELHLDIIVDRMRREFNVEANVGKPQVAYRETIRKSDVKSDYKHAKQSGGKGQYGHVVIELSPMTEEERKSDNVKDDFLFVNDITGGIIPKEFIPSVEKGLRETITSGPIAGFPVVGVKVKLVFGSYHDVDSSEMAFKLAASMAFKQGFAKASPVLLEPIMKVEIVSPEDYLGDVMGDVSRRRGVLQGQDDSPSGKIINAMIPLGEMFGYATSLRSMSQGRATFSMEFDHYEEAPANIADAVTKKG.

The region spanning Glu8–Ala290 is the tr-type G domain. Residues Ala17–Thr24, Asp88–His92, and Asn142–Asp145 each bind GTP. Positions Ala290 to Ala309 are disordered.

It belongs to the TRAFAC class translation factor GTPase superfamily. Classic translation factor GTPase family. EF-G/EF-2 subfamily.

Its subcellular location is the cytoplasm. In terms of biological role, catalyzes the GTP-dependent ribosomal translocation step during translation elongation. During this step, the ribosome changes from the pre-translocational (PRE) to the post-translocational (POST) state as the newly formed A-site-bound peptidyl-tRNA and P-site-bound deacylated tRNA move to the P and E sites, respectively. Catalyzes the coordinated movement of the two tRNA molecules, the mRNA and conformational changes in the ribosome. In Xanthomonas axonopodis pv. citri (strain 306), this protein is Elongation factor G.